We begin with the raw amino-acid sequence, 468 residues long: MSDQNDKKVEIIVFPYHGQGHMNTMLQFAKRIAWKNAKVTIATTLSTTNKMKSKVENAWGTSITLDSIYDDSDESQIKFMDRMARFEAAAASSLSKLLVQKKEEADNKVLLVYDGNLPWALDIAHEHGVRGAAFFPQSCATVATYYSLYQETQGKELETELPAVFPPLELIQRNVPNVFGLKFPEAVVAKNGKEYSPFVLFVLRQCINLEKADLLLFNQFDKLVEPGEVLQWMSKIFNVKTIGPTLPSSYIDKRIKDDVDYGFHAFNLDNNSCINWLNSKPARSVIYIAFGSSVHYSVEQMTEIAEALKSQPNNFLWAVRETEQKKLPEDFVQQTSEKGLMLSWCPQLDVLVHESISCFVTHCGWNSITEALSFGVPMLSVPQFLDQPVDAHFVEQVWGAGITVKRSEDGLVTRDEIVRCLEVLNNGEKAEEIKANVARWKVLAKEALDEGGSSDKHIDEIIEWVSSF.

G20 lines the UDP-alpha-D-glucose pocket. The Proton acceptor role is filled by H21. Residue D114 is the Charge relay of the active site. Residues S292, W344, Q347, H362, W365, N366, S367, E370, D386, and Q387 each coordinate UDP-alpha-D-glucose.

The protein belongs to the UDP-glycosyltransferase family. Mainly expressed in flowers, flower buds and young leaves, and, to a lesser extent, in old leaves, stems and roots.

It functions in the pathway secondary metabolite biosynthesis; terpenoid biosynthesis. Component of the oleanane-type triterpene saponins (e.g. saponarioside A and saponarioside B) biosynthetic pathway, leading to the production of natural products with detergent properties used as traditional sources of soap. A glycosyltransferase that, together with SDR1, mediates the conversion of QA-tri to QA-triF; UGT74CD1 may transfer 4-keto-6-deoxy-glucose to QA-tri, which is in turn reduced to D-fucose by SDR1, thus leading to QA-triF formation via the initiation of the C-28 sugar chain. The polypeptide is UDP-glucosyl transferase 74CD1 (Saponaria officinalis (Common soapwort)).